The primary structure comprises 148 residues: UPF0756 membrane protein YeaL (148 aa).

The next 4 membrane-spanning stretches (helical) occupy residues 14–34, 51–71, 86–106, and 121–141; these read ALGF…LIIV, LSIG…SGTL, LVAI…VTLM, and VLGV…AGLV.

This sequence belongs to the UPF0756 family.

The protein localises to the cell membrane. This Shigella flexneri protein is UPF0756 membrane protein YeaL.